Consider the following 382-residue polypeptide: MRKPINLLREFSVPLIAGVITALAWANLDPRGYDALIHQPSFGGVSLHFLVNELFMVLFFGIAAAEITQSCLPGGDLNPPRKAVNPLLATLGGVIGPVLVYLSLNAVIGDPTLTKGWGIPTATDIALAWLVARLVFGAGHPAVSFLLLLAVADDAIGLAIIAVFYPDPVHPTEPMWLFLTVAGIVAAYILRGARAKSYWPYVLVGGGLSWTGLFKAHLHPALALVFIIPFLPHPPRESAHLFEENPRDTSPLARFEHDWKIVVDFGLFLFGLANAGVRFSSVGTATWLVLTALLVGKTAGILTMGSLGKALGFPLPDRVGFKELALTGLVAGMGLTVALFVAGVAFVDPDIEGAAKMGALLSGGVLPVAVALGRILKVRRIP.

Transmembrane regions (helical) follow at residues 5 to 25 (INLL…ALAW), 42 to 62 (FGGV…FFGI), 88 to 108 (LATL…NAVI), 116 to 136 (GWGI…RLVF), 145 to 165 (FLLL…AVFY), 169 to 189 (VHPT…AAYI), 261 to 281 (IVVD…RFSS), 282 to 302 (VGTA…AGIL), 327 to 347 (TGLV…VAFV), and 353 to 373 (GAAK…VALG).

The protein belongs to the NhaA Na(+)/H(+) (TC 2.A.33) antiporter family.

It localises to the cell inner membrane. The catalysed reaction is Na(+)(in) + 2 H(+)(out) = Na(+)(out) + 2 H(+)(in). Its function is as follows. Na(+)/H(+) antiporter that extrudes sodium in exchange for external protons. The chain is Na(+)/H(+) antiporter NhaA from Geobacter metallireducens (strain ATCC 53774 / DSM 7210 / GS-15).